Consider the following 718-residue polypeptide: Kelch-like protein 4 (718 aa).

A disordered region spans residues 46-69 (TPVQGRLKSHSRDRNGLKKSNSPV). The region spanning 182–249 (CDVLLIAGHL…AYTGVLQLKE (68 aa)) is the BTB domain. 6 Kelch repeats span residues 430–476 (ALYA…VIDN), 477–523 (KLYV…TLEG), 525–570 (MYAV…ALNN), 571–617 (KLYA…TYNG), 619–670 (LYVV…PLGD), and 671–717 (KLYV…VVKL).

As to expression, expressed in adult fibroblasts and in a range of fetal tissues including tongue, palate, and mandible.

Its subcellular location is the cytoplasm. It localises to the cytoskeleton. In Homo sapiens (Human), this protein is Kelch-like protein 4 (KLHL4).